Consider the following 457-residue polypeptide: Multidrug resistance protein MdtK (457 aa).

The next 12 membrane-spanning stretches (helical) occupy residues 11 to 31 (LLAL…MGVV), 46 to 66 (AVAV…GLLL), 93 to 113 (WLAL…DHVI), 127 to 147 (AVGF…FQVL), 160 to 180 (GMVI…IFIY), 188 to 208 (LGGV…FLMM), 243 to 263 (LPVA…ALLV), 283 to 301 (LMFM…RVGF), 316 to 336 (YTSM…TIVF), 357 to 377 (LMLL…GSGV), 387 to 407 (IFFI…YLLG), and 418 to 438 (PAGF…LMVL).

It belongs to the multi antimicrobial extrusion (MATE) (TC 2.A.66.1) family. MdtK subfamily.

It is found in the cell inner membrane. Multidrug efflux pump that functions probably as a Na(+)/drug antiporter. This chain is Multidrug resistance protein MdtK, found in Yersinia pseudotuberculosis serotype IB (strain PB1/+).